The sequence spans 287 residues: DDRGK domain-containing protein 1 (287 aa).

Over 1-5 the chain is Lumenal; it reads MDLIL. The chain crosses the membrane as a helical span at residues 6–26; sequence LLGIAVALLVILVTLFFFTKG. Over 27–287 the chain is Cytoplasmic; that stretch reads KGSQESGKYN…LINLVPVSAE (261 aa). Disordered regions lie at residues 28 to 102 and 135 to 164; these read GSQE…KRAK and KVEA…RQEH. Residues 44–68 are compositionally biased toward low complexity; that stretch reads AQAAPRRAQVVRNQRNRARVAAAPA. Basic and acidic residues predominate over residues 85–102; sequence IPHADFNGEKMGAKKRAK.

Belongs to the DDRGK1 family. In terms of assembly, interacts with Atg9; the interaction is transient.

It is found in the endoplasmic reticulum membrane. Substrate adapter for ufmylation, the covalent attachment of the ubiquitin-like modifier UFM1 to substrate proteins. Required for ufmylation of Atg9; protects the nervous system during aging, possibly by stabilizing Atg9 and supporting its function. In Culex quinquefasciatus (Southern house mosquito), this protein is DDRGK domain-containing protein 1.